The primary structure comprises 149 residues: General odorant-binding protein 99b (149 aa).

The signal sequence occupies residues 1–16; that stretch reads MKVLIVLLLGLAFVLA. 3 cysteine pairs are disulfide-bonded: cysteine 40–cysteine 71, cysteine 67–cysteine 125, and cysteine 114–cysteine 134.

The protein belongs to the PBP/GOBP family. As to expression, expressed in adult olfactory system. Expressed in subsets of sensilla in both olfactory organs, the maxillary palps, and third antennal segments.

Its subcellular location is the secreted. Present in the aqueous fluid surrounding olfactory sensory dendrites and are thought to aid in the capture and transport of hydrophobic odorants into and through this fluid. This Drosophila melanogaster (Fruit fly) protein is General odorant-binding protein 99b (Obp99b).